Here is a 560-residue protein sequence, read N- to C-terminus: Embryonal Fyn-associated substrate (560 aa).

An SH3 domain is found at 5–68 (TSAQLARALY…PANRVKLLPA (64 aa)). 2 disordered regions span residues 176–219 (VVPQ…LYAA) and 241–372 (ANGE…NEYE). Basic and acidic residues predominate over residues 198-210 (AELERDPEWEGGR). A Phosphotyrosine; by SRC modification is found at tyrosine 253. Residues 259 to 268 (GPEPPSPEPP) show a composition bias toward pro residues. 2 consecutive short sequence motifs (SH3-binding) follow at residues 304 to 310 (RPLPALP) and 334 to 340 (RPLPPPP). A compositionally biased stretch (low complexity) spans 305–315 (PLPALPVSEAP). The segment covering 351 to 361 (PEGDPECREVA) has biased composition (basic and acidic residues). The segment at 437 to 487 (FYAGQCQSHYSALQAAVAALVASTQANQPPCLFVPHGKRVVVAAHRLVFVG) is divergent helix-loop-helix motif.

Belongs to the CAS family. Phosphorylated on multiple tyrosine residues. Phosphorylated on tyrosines by FYN and SRC. As to expression, widely expressed. Higher levels found in placenta and embryo. Lower levels found in brain, brainstem, muscle and lung. No expression in liver and intestine.

Docking protein which plays a central coordinating role for tyrosine-kinase-based signaling related to cell adhesion. May serve as an activator of SRC and a downstream effector. Interacts with the SH3 domain of FYN and with CRK, SRC, and YES. This is Embryonal Fyn-associated substrate (Efs) from Mus musculus (Mouse).